The primary structure comprises 249 residues: Large ribosomal subunit protein uL4 (249 aa).

Belongs to the universal ribosomal protein uL4 family. In terms of assembly, part of the 50S ribosomal subunit.

Its function is as follows. One of the primary rRNA binding proteins, this protein initially binds near the 5'-end of the 23S rRNA. It is important during the early stages of 50S assembly. It makes multiple contacts with different domains of the 23S rRNA in the assembled 50S subunit and ribosome. Functionally, forms part of the polypeptide exit tunnel. The protein is Large ribosomal subunit protein uL4 of Methanospirillum hungatei JF-1 (strain ATCC 27890 / DSM 864 / NBRC 100397 / JF-1).